The following is a 426-amino-acid chain: Serine--tRNA ligase (426 aa).

230-232 (TSE) serves as a coordination point for L-serine. Residue 261–263 (RSE) coordinates ATP. E284 serves as a coordination point for L-serine. 348 to 351 (EISS) is an ATP binding site. S384 is an L-serine binding site.

It belongs to the class-II aminoacyl-tRNA synthetase family. Type-1 seryl-tRNA synthetase subfamily. Homodimer. The tRNA molecule binds across the dimer.

Its subcellular location is the cytoplasm. It catalyses the reaction tRNA(Ser) + L-serine + ATP = L-seryl-tRNA(Ser) + AMP + diphosphate + H(+). The enzyme catalyses tRNA(Sec) + L-serine + ATP = L-seryl-tRNA(Sec) + AMP + diphosphate + H(+). The protein operates within aminoacyl-tRNA biosynthesis; selenocysteinyl-tRNA(Sec) biosynthesis; L-seryl-tRNA(Sec) from L-serine and tRNA(Sec): step 1/1. Functionally, catalyzes the attachment of serine to tRNA(Ser). Is also able to aminoacylate tRNA(Sec) with serine, to form the misacylated tRNA L-seryl-tRNA(Sec), which will be further converted into selenocysteinyl-tRNA(Sec). The chain is Serine--tRNA ligase from Sphingopyxis alaskensis (strain DSM 13593 / LMG 18877 / RB2256) (Sphingomonas alaskensis).